We begin with the raw amino-acid sequence, 476 residues long: Xylan O-acetyltransferase 4 (476 aa).

Residues 1–37 (MTKPQQQSPPSTTATTTTSPPPPPPSTPPPASSSSSS) are disordered. The Cytoplasmic portion of the chain corresponds to 1–63 (MTKPQQQSPP…SLLSALRRSP (63 aa)). The segment covering 8-18 (SPPSTTATTTT) has biased composition (low complexity). Pro residues predominate over residues 19–31 (SPPPPPPSTPPPA). The helical; Signal-anchor for type II membrane protein transmembrane segment at 64 to 80 (VTTLVAAFFLLALFMYG) threads the bilayer. Residues 81-476 (EDVRTLAELS…PSPHPPLPPQ (396 aa)) are Lumenal-facing. 3 N-linked (GlcNAc...) asparagine glycosylation sites follow: N103, N128, and N167. Disulfide bonds link C117-C168, C139-C204, C148-C444, and C360-C440. Positions 191–193 (GDS) match the GDS motif motif. S193 functions as the Nucleophile in the catalytic mechanism. 2 N-linked (GlcNAc...) asparagine glycosylation sites follow: N299 and N369. The Proton donor role is filled by D439. The short motif at 439-442 (DCIH) is the DXXH motif element. The Proton acceptor role is filled by H442.

The protein belongs to the PC-esterase family. TBL subfamily. As to expression, highly expressed in leaves. Expressed in roots, stems and inflorescences.

It is found in the golgi apparatus membrane. Xylan acetyltransferase required for 2-O- and 3-O-monoacetylation of xylosyl residues in xylan. Catalyzes the 2-O-acetylation of xylan, followed by nonenzymatic acetyl migration to the O-3 position, resulting in products that are monoacetylated at both O-2 and O-3 positions. The chain is Xylan O-acetyltransferase 4 from Oryza sativa subsp. japonica (Rice).